The following is a 438-amino-acid chain: Proline--tRNA ligase (438 aa).

Belongs to the class-II aminoacyl-tRNA synthetase family. ProS type 2 subfamily. As to quaternary structure, homodimer.

The protein resides in the cytoplasm. The enzyme catalyses tRNA(Pro) + L-proline + ATP = L-prolyl-tRNA(Pro) + AMP + diphosphate. Functionally, catalyzes the attachment of proline to tRNA(Pro) in a two-step reaction: proline is first activated by ATP to form Pro-AMP and then transferred to the acceptor end of tRNA(Pro). This Rhodopseudomonas palustris (strain TIE-1) protein is Proline--tRNA ligase.